The sequence spans 419 residues: Cytosine permease (419 aa).

Topologically, residues 1-19 (MSQDNNFSQGPVPQSARKG) are cytoplasmic. A helical transmembrane segment spans residues 20–39 (VLALTFVMLGLTFFSASMWT). Topologically, residues 40–51 (GGTLGTGLSYHD) are periplasmic. A helical membrane pass occupies residues 52-71 (FFLAVLIGNLLLGIYTSFLG). Residues 72 to 100 (YIGAKTGLTTHLLARFSFGVKGSWLPSLL) are Cytoplasmic-facing. The chain crosses the membrane as a helical span at residues 101–120 (LGGTQVGWFGVGVAMFAIPV). The Periplasmic portion of the chain corresponds to 121–127 (GKATGLD). The chain crosses the membrane as a helical span at residues 128 to 147 (INLLIAVSGLLMTVTVFFGI). At 148–152 (SALTV) the chain is on the cytoplasmic side. The helical transmembrane segment at 153 to 172 (LSLIAVPAIACLGGYSVWLA) threads the bilayer. Topologically, residues 173-192 (VNGMGGLDALKAVVPAQPLD) are periplasmic. Residues 193–212 (FNVALALVVGSFISAGTLTA) traverse the membrane as a helical segment. Residues 213–221 (DFVRFGRNA) lie on the Cytoplasmic side of the membrane. A helical transmembrane segment spans residues 222–242 (KLAVLVAMVAFFLGNSLMFIF). At 243 to 257 (GAAGAAALGMADISD) the chain is on the periplasmic side. Residues 258–277 (VMIAQGLLLPAIVVLGLNIW) form a helical membrane-spanning segment. Residues 278–300 (TTNDNALYASGLGFANITGMSSK) lie on the Cytoplasmic side of the membrane. Residues 301 to 320 (TLSVINGIIGTVCALWLYNN) traverse the membrane as a helical segment. A topological domain (periplasmic) is located at residue F321. Residues 322–341 (VGWLTFLSAAIPPVGGVIIA) traverse the membrane as a helical segment. At 342 to 358 (DYLMNRRRYEHFATTRM) the chain is on the cytoplasmic side. The helical transmembrane segment at 359 to 378 (MSVNWVAILAVALGIAAGHW) threads the bilayer. Residues 379–380 (LP) lie on the Periplasmic side of the membrane. Residues 381–400 (GIVPVNAVLGGALSYLILNP) form a helical membrane-spanning segment. The Cytoplasmic segment spans residues 401-419 (ILNRKTTAAMTHVEANSVE).

It belongs to the purine-cytosine permease (2.A.39) family.

It is found in the cell inner membrane. Its function is as follows. Required for cytosine transport into the cell. The protein is Cytosine permease (codB) of Escherichia coli O157:H7.